A 403-amino-acid chain; its full sequence is Guanine nucleotide-binding protein alpha-8 subunit (403 aa).

Gly2 carries the N-myristoyl glycine lipid modification. The S-palmitoyl cysteine moiety is linked to residue Cys3. The 326-residue stretch at 31 to 356 (LDFRILLLGA…KVLMKATKDL (326 aa)) folds into the G-alpha domain. A G1 motif region spans residues 34–47 (RILLLGAGESGKST). Residues 39–46 (GAGESGKS), 174–180 (IMTRVRT), 199–203 (DVGGQ), 268–271 (NKKD), and Ala324 contribute to the GTP site. Mg(2+) contacts are provided by Ser46 and Thr180. The G2 motif stretch occupies residues 172–180 (DCIMTRVRT). The G3 motif stretch occupies residues 195–204 (FRVVDVGGQR). Positions 264–271 (FLVLNKKD) are G4 motif. A G5 motif region spans residues 322 to 327 (IAARYK). The tract at residues 353-403 (TKDLKKSSKQSSKSSLGNSTQNNSNNNNNNNNSNNNNGQTTIDGATAKINS) is disordered. Residues 374-389 (NNSNNNNNNNNSNNNN) are compositionally biased toward low complexity. Over residues 390 to 403 (GQTTIDGATAKINS) the composition is skewed to polar residues.

Belongs to the G-alpha family. As to quaternary structure, g proteins are composed of 3 units; alpha, beta and gamma. The alpha chain contains the guanine nucleotide binding site.

Guanine nucleotide-binding proteins (G proteins) are involved as modulators or transducers in various transmembrane signaling systems. G alpha-8 is a potential analog for the G(s)-like G-proteins which stimulate adenylate cyclase in mammals. This Dictyostelium discoideum (Social amoeba) protein is Guanine nucleotide-binding protein alpha-8 subunit (gpaH).